Reading from the N-terminus, the 549-residue chain is Mitogen-activated protein kinase 15 (549 aa).

The tract at residues 1–20 (MCAAEVDRHVAQRYLIKRRL) is ubiquitin-conjugating. The Protein kinase domain maps to 14 to 305 (YLIKRRLGKG…AEQALQHPYV (292 aa)). Residues 20-28 (LGKGAYGIV) and K43 each bind ATP. Residue D138 is the Proton acceptor of the active site. The residue at position 176 (T176) is a Phosphothreonine. The TXY signature appears at 176–178 (TEY). Y178 bears the Phosphotyrosine mark. The segment at 266 to 286 (LDALLPPDTPPEALDLLKRLL) is necessary to interact with ESRRA, to regulate its subcellular localization and to inhibit its transcriptional activity. The requires for interaction with GABARAP, MAP1LC3B AND GABARAPL1 stretch occupies residues 301-382 (QHPYVQRFHC…ARTQSLKSGV (82 aa)). Residues 370–507 (ASPARTQSLK…PEPRPGRRMF (138 aa)) are disordered. PXXXP motif repeat units lie at residues 380 to 384 (SGVLP) and 387 to 391 (PAETP). PXXXP motif; regulates binding with chromatin and interaction with PCNA repeat units follow at residues 395 to 399 (RGPKP) and 403 to 407 (PGHDP). Residues 403–416 (PGHDPEHVEVRRQS) show a composition bias toward basic and acidic residues. R451 bears the Omega-N-methylarginine mark. A compositionally biased stretch (polar residues) spans 456–467 (SLTSQAEAQAAN). Residues 483-492 (AVGARRVPSR) show a composition bias toward low complexity. Over residues 493 to 502 (LPREAPEPRP) the composition is skewed to basic and acidic residues.

This sequence belongs to the protein kinase superfamily. CMGC Ser/Thr protein kinase family. MAP kinase subfamily. As to quaternary structure, interacts with TGFB1I1. Interacts with CSK/c-Src, ABL1 and RET. Interacts with GABARAP, MAP1LC3B and GABARAPL1; controls, in a kinase-dependent fashion, both basal and starvation-induced autophagy. Interacts with ESRRA; promotes re-localization of ESRRA to the cytoplasm through a XPO1-dependent mechanism then inhibits ESRRA transcriptional activity. Interacts with PCNA; the interaction is chromatin binding- and kinase activity-dependent and prevents MDM2-mediated PCNA destruction by inhibiting the association of PCNA with MDM2. Interacts with DVL2. Interacts with CLIC3; MAPK15 does not phosphorylates CLIC3. Post-translationally, autophosphorylated on Thr-176 and Tyr-178; activates the enzyme. Ubiquitinated. Ubiquitination may allow its tight kinase activity regulation and rapid turnover. May be ubiquitinated by a SCF E3 ligase. As to expression, expressed at all stages of oocyte meiotic maturation.

Its subcellular location is the cytoplasm. It is found in the cytoskeleton. The protein resides in the cilium basal body. The protein localises to the cell junction. It localises to the tight junction. Its subcellular location is the microtubule organizing center. It is found in the centrosome. The protein resides in the centriole. The protein localises to the cytoplasmic vesicle. It localises to the autophagosome. Its subcellular location is the golgi apparatus. It is found in the nucleus. The protein resides in the spindle. The catalysed reaction is L-seryl-[protein] + ATP = O-phospho-L-seryl-[protein] + ADP + H(+). It carries out the reaction L-threonyl-[protein] + ATP = O-phospho-L-threonyl-[protein] + ADP + H(+). Its activity is regulated as follows. Activated by threonine and tyrosine phosphorylation. Inhibited by dual specificity phosphatases, such as DUSP1. Phosphorylation and activation in response to DNA damaging agents, serum stimulation. Constitutively activated when phosphorylated on Tyr-178. Activity depends on the relative rates of MAPK15 autophosphorylation and dephosphorylation by PTPN1. Atypical MAPK protein that regulates several process such as autophagy, ciliogenesis, protein trafficking/secretion and genome integrity, in a kinase activity-dependent manner. Controls both, basal and starvation-induced autophagy throught its interaction with GABARAP, MAP1LC3B and GABARAPL1 leading to autophagosome formation, SQSTM1 degradation and reduced MAP1LC3B inhibitory phosphorylation. Regulates primary cilium formation and the localization of ciliary proteins involved in cilium structure, transport, and signaling. Prevents the relocation of the sugar-adding enzymes from the Golgi to the endoplasmic reticulum, thereby restricting the production of sugar-coated proteins. Upon amino-acid starvation, mediates transitional endoplasmic reticulum site disassembly and inhibition of secretion. Binds to chromatin leading to MAPK15 activation and interaction with PCNA, that which protects genomic integrity by inhibiting MDM2-mediated degradation of PCNA. Regulates DA transporter (DAT) activity and protein expression via activation of RhoA. In response to H(2)O(2) treatment phosphorylates ELAVL1, thus preventing it from binding to the PDCD4 3'UTR and rendering the PDCD4 mRNA accessible to miR-21 and leading to its degradation and loss of protein expression. Also functions in a kinase activity-independent manner as a negative regulator of growth. Phosphorylates in vitro FOS and MBP. During oocyte maturation, plays a key role in the microtubule organization and meiotic cell cycle progression in oocytes, fertilized eggs, and early embryos. Interacts with ESRRA promoting its re-localization from the nucleus to the cytoplasm and then prevents its transcriptional activity. This chain is Mitogen-activated protein kinase 15, found in Mus musculus (Mouse).